The sequence spans 404 residues: 26S proteasome regulatory subunit 6A-B (404 aa).

Residue 192-199 (GPPGTGKT) participates in ATP binding.

This sequence belongs to the AAA ATPase family. In terms of assembly, may form a heterodimer with a related family member.

The protein resides in the cytoplasm. The protein localises to the nucleus. Its function is as follows. The 26S proteasome is involved in the ATP-dependent degradation of ubiquitinated proteins. The regulatory (or ATPase) complex confers ATP dependency and substrate specificity to the 26S complex. The chain is 26S proteasome regulatory subunit 6A-B (psmc3-b) from Xenopus laevis (African clawed frog).